Here is a 255-residue protein sequence, read N- to C-terminus: Ribonuclease HII (255 aa).

One can recognise an RNase H type-2 domain in the interval 72–255; sequence AIICGIDEVG…KSFEPIKSLL (184 aa). Residues Asp78, Glu79, and Asp170 each coordinate a divalent metal cation.

The protein belongs to the RNase HII family. The cofactor is Mn(2+). Requires Mg(2+) as cofactor.

The protein resides in the cytoplasm. It catalyses the reaction Endonucleolytic cleavage to 5'-phosphomonoester.. Endonuclease that specifically degrades the RNA of RNA-DNA hybrids. The protein is Ribonuclease HII of Staphylococcus aureus (strain bovine RF122 / ET3-1).